We begin with the raw amino-acid sequence, 431 residues long: Chaperone SurA (431 aa).

Positions 1-20 (MKLTVVTFALLAFISFNTFA) are cleaved as a signal peptide. PpiC domains follow at residues 171–272 (QAEY…KIID) and 281–381 (VAEL…QLMD).

It localises to the periplasm. It carries out the reaction [protein]-peptidylproline (omega=180) = [protein]-peptidylproline (omega=0). In terms of biological role, chaperone involved in the correct folding and assembly of outer membrane proteins. Recognizes specific patterns of aromatic residues and the orientation of their side chains, which are found more frequently in integral outer membrane proteins. May act in both early periplasmic and late outer membrane-associated steps of protein maturation. The polypeptide is Chaperone SurA (Pseudoalteromonas atlantica (strain T6c / ATCC BAA-1087)).